The sequence spans 119 residues: Holo-[acyl-carrier-protein] synthase (119 aa).

Mg(2+)-binding residues include D7 and E56.

It belongs to the P-Pant transferase superfamily. AcpS family. Mg(2+) serves as cofactor.

Its subcellular location is the cytoplasm. It catalyses the reaction apo-[ACP] + CoA = holo-[ACP] + adenosine 3',5'-bisphosphate + H(+). Transfers the 4'-phosphopantetheine moiety from coenzyme A to a Ser of acyl-carrier-protein. This is Holo-[acyl-carrier-protein] synthase from Chlamydia trachomatis serovar L2 (strain ATCC VR-902B / DSM 19102 / 434/Bu).